The sequence spans 122 residues: Large ribosomal subunit protein uL14 (122 aa).

It belongs to the universal ribosomal protein uL14 family. As to quaternary structure, part of the 50S ribosomal subunit. Forms a cluster with proteins L3 and L19. In the 70S ribosome, L14 and L19 interact and together make contacts with the 16S rRNA in bridges B5 and B8.

Binds to 23S rRNA. Forms part of two intersubunit bridges in the 70S ribosome. The sequence is that of Large ribosomal subunit protein uL14 from Caldicellulosiruptor saccharolyticus (strain ATCC 43494 / DSM 8903 / Tp8T 6331).